Consider the following 606-residue polypeptide: NADH-ubiquinone oxidoreductase chain 5 (606 aa).

N-formylmethionine is present on methionine 1. A run of 15 helical transmembrane segments spans residues 4-24 (FSSL…MMSF), 43-63 (AFIT…ELII), 87-107 (MMFI…SMWY), 117-137 (FFKY…ANNL), 140-160 (LFIG…WWYG), 171-191 (AILY…WFLT), 213-233 (LIGL…HPWL), 241-261 (TPVS…FLLI), 273-293 (IQSI…MCAL), 310-330 (LGLM…LHIC), 366-386 (MPFT…MPFL), 413-433 (LIAT…ALLG), 457-477 (LLIG…PTTI), 482-502 (MPYY…ILAL), and 582-602 (GLIK…MILF).

As to quaternary structure, core subunit of respiratory chain NADH dehydrogenase (Complex I) which is composed of 45 different subunits.

The protein localises to the mitochondrion inner membrane. The catalysed reaction is a ubiquinone + NADH + 5 H(+)(in) = a ubiquinol + NAD(+) + 4 H(+)(out). Core subunit of the mitochondrial membrane respiratory chain NADH dehydrogenase (Complex I) which catalyzes electron transfer from NADH through the respiratory chain, using ubiquinone as an electron acceptor. Essential for the catalytic activity and assembly of complex I. In Bos taurus (Bovine), this protein is NADH-ubiquinone oxidoreductase chain 5 (MT-ND5).